A 377-amino-acid polypeptide reads, in one-letter code: N-acetyldiaminopimelate deacetylase (377 aa).

Asp-70 is an active-site residue. Glu-129 acts as the Proton acceptor in catalysis.

Belongs to the peptidase M20A family. N-acetyldiaminopimelate deacetylase subfamily.

It catalyses the reaction N-acetyl-(2S,6S)-2,6-diaminopimelate + H2O = (2S,6S)-2,6-diaminopimelate + acetate. It functions in the pathway amino-acid biosynthesis; L-lysine biosynthesis via DAP pathway; LL-2,6-diaminopimelate from (S)-tetrahydrodipicolinate (acetylase route): step 3/3. In terms of biological role, catalyzes the conversion of N-acetyl-diaminopimelate to diaminopimelate and acetate. The protein is N-acetyldiaminopimelate deacetylase of Streptococcus thermophilus (strain CNRZ 1066).